The sequence spans 193 residues: PXMP2/4 family protein 2 (193 aa).

A run of 4 helical transmembrane segments spans residues 56 to 78 (VATMSTVGIFYSGPMLHYWYRSL), 96 to 116 (IDQLLFAPVAIGGFMTVTNFI), 132 to 152 (LFYAVKINWLIWPAAQIINFS), and 160 to 180 (VLYSSIISIFWGMFLSHISFD).

Belongs to the peroxisomal membrane protein PXMP2/4 family.

The protein localises to the membrane. In Dictyostelium discoideum (Social amoeba), this protein is PXMP2/4 family protein 2.